A 297-amino-acid polypeptide reads, in one-letter code: HTH-type transcriptional regulator ArgP (297 aa).

Residues 2 to 58 (FDYKLLSALAAVVEQAGFERAAQVLGLSQSAISQRIKLLEARVGQPVLVRGTPPSPT) enclose the HTH lysR-type domain. Residues 19–38 (FERAAQVLGLSQSAISQRIK) constitute a DNA-binding region (H-T-H motif).

The protein belongs to the LysR transcriptional regulatory family. Homodimer.

Its function is as follows. Controls the transcription of genes involved in arginine and lysine metabolism. The protein is HTH-type transcriptional regulator ArgP of Pseudomonas fluorescens (strain Pf0-1).